The sequence spans 104 residues: Type VII secretion system extracellular protein B (104 aa).

Belongs to the WXG100 family. In terms of assembly, homodimer. When mixed with EsxA does not form heterodimers.

It is found in the secreted. Its function is as follows. Virulence factor that is important for the establishment of infection in the host. EsxB is required for EsxA synthesis as well as secretion. Mediates together with EsxA the release of S.aureus from the host cell. Also inhibits host cytokine production and thus modulates dendritic cell-mediated immunity. In Staphylococcus aureus (strain Mu50 / ATCC 700699), this protein is Type VII secretion system extracellular protein B.